The primary structure comprises 416 residues: Serine protease hepsin (416 aa).

Residues 1–18 (MAKEGGRTAPCCSRPKVA) are Cytoplasmic-facing. The helical; Signal-anchor for type II membrane protein transmembrane segment at 19–39 (ALTVGTLLFLTGIGAASWAIV) threads the bilayer. At 40–416 (TILLRSDQEP…SEATGMVTQP (377 aa)) the chain is on the extracellular side. Positions 53 to 150 (VQLSPGDSRL…RGRFLTATCQ (98 aa)) constitute an SRCR domain. 8 cysteine pairs are disulfide-bonded: C76/C139, C89/C149, C118/C137, C152/C276, C187/C203, C290/C358, C321/C337, and C348/C380. An N-linked (GlcNAc...) asparagine glycan is attached at N111. Residues 162 to 404 (IVGGQDSSLG…FREWIFQAIK (243 aa)) form the Peptidase S1 domain. Active-site charge relay system residues include H202 and D256. S352 functions as the Charge relay system in the catalytic mechanism.

It belongs to the peptidase S1 family. Widely expressed. Present in brain, heart, kidney, liver, stomach, muscle, lung, testis, skin and eye. Not expressed in ovary and thynus. In inner ear tissues, expressed in stria vascularis, modiolus, organ of Corti and spiral ganglion.

It is found in the cell membrane. It localises to the apical cell membrane. It catalyses the reaction Cleavage after basic amino-acid residues, with Arg strongly preferred to Lys.. In terms of biological role, serine protease that cleaves extracellular substrates, and contributes to the proteolytic processing of growth factors, such as HGF and MST1/HGFL. Plays a role in cell growth and maintenance of cell morphology. Plays a role in the proteolytic processing of ACE2. Mediates the proteolytic cleavage of urinary UMOD that is required for UMOD polymerization. This chain is Serine protease hepsin (Hpn), found in Rattus norvegicus (Rat).